The following is a 629-amino-acid chain: Probable potassium transport system protein Kup 3 (629 aa).

Helical transmembrane passes span 20–40, 61–81, 106–126, 143–163, 171–191, 212–232, 253–273, 291–311, 343–363, 372–392, 400–420, and 425–445; these read LSLS…LYTF, VSLI…SFAL, PFII…GTIT, PSLK…LFAI, IGKA…ILGA, FLFS…LCVT, WFGL…ALVL, FLLP…QAII, IYIG…TIGF, AYGI…FIAL, IITS…FFAA, and FING…MMYI.

Belongs to the HAK/KUP transporter (TC 2.A.72) family.

The protein resides in the cell inner membrane. It carries out the reaction K(+)(in) + H(+)(in) = K(+)(out) + H(+)(out). In terms of biological role, transport of potassium into the cell. Likely operates as a K(+):H(+) symporter. This Legionella pneumophila (strain Lens) protein is Probable potassium transport system protein Kup 3.